The sequence spans 654 residues: Acetyl-coenzyme A synthetase (654 aa).

Residues 190–193 (RGGK) and threonine 313 each bind CoA. Residues 389–391 (GEP), 413–418 (DTWWQT), aspartate 504, and arginine 519 contribute to the ATP site. Position 527 (serine 527) interacts with CoA. Arginine 530 lines the ATP pocket. Residues valine 541, histidine 543, and valine 546 each coordinate Mg(2+). At lysine 613 the chain carries N6-acetyllysine.

It belongs to the ATP-dependent AMP-binding enzyme family. Mg(2+) serves as cofactor. Post-translationally, acetylated. Deacetylation by the SIR2-homolog deacetylase activates the enzyme.

The enzyme catalyses acetate + ATP + CoA = acetyl-CoA + AMP + diphosphate. Functionally, catalyzes the conversion of acetate into acetyl-CoA (AcCoA), an essential intermediate at the junction of anabolic and catabolic pathways. AcsA undergoes a two-step reaction. In the first half reaction, AcsA combines acetate with ATP to form acetyl-adenylate (AcAMP) intermediate. In the second half reaction, it can then transfer the acetyl group from AcAMP to the sulfhydryl group of CoA, forming the product AcCoA. This Leptospira biflexa serovar Patoc (strain Patoc 1 / Ames) protein is Acetyl-coenzyme A synthetase.